Here is a 174-residue protein sequence, read N- to C-terminus: 2-oxo-4-hydroxy-4-carboxy-5-ureidoimidazoline decarboxylase (174 aa).

Histidine 67 (proton donor) is an active-site residue. Substrate contacts are provided by residues proline 68, 84–88 (SQEEQ), and 119–123 (FVICA). The short motif at 172 to 174 (TKL) is the Microbody targeting signal element.

This sequence belongs to the OHCU decarboxylase family. Homodimer.

It is found in the peroxisome. It catalyses the reaction 5-hydroxy-2-oxo-4-ureido-2,5-dihydro-1H-imidazole-5-carboxylate + H(+) = (S)-allantoin + CO2. Its pathway is purine metabolism; urate degradation; (S)-allantoin from urate: step 3/3. In terms of biological role, catalyzes the stereoselective decarboxylation of 2-oxo-4-hydroxy-4-carboxy-5-ureidoimidazoline (OHCU) to (S)-allantoin. The chain is 2-oxo-4-hydroxy-4-carboxy-5-ureidoimidazoline decarboxylase (urad) from Danio rerio (Zebrafish).